We begin with the raw amino-acid sequence, 137 residues long: Small integral membrane protein 9 (137 aa).

Positions 1–23 (MKPLKLFCIGLLLCPLVCLLLET) are cleaved as a signal peptide. Over 24–84 (APPPSALLTL…NHLSDFFKSS (61 aa)) the chain is Extracellular. A helical transmembrane segment spans residues 85–105 (IPPAAIFALFVTTAIMRAAIV). Residues 106-137 (NKRLEEPHRQWTIDQRSSLEMQNMNLIKLFGG) are Cytoplasmic-facing.

It localises to the cell membrane. This is Small integral membrane protein 9 (Smim9) from Mus musculus (Mouse).